Consider the following 443-residue polypeptide: SAM50-like protein CG7639 (443 aa).

In terms of domain architecture, POTRA spans 23 to 101 (ARVDRVNVSG…QGYEVTFKGN (79 aa)).

This sequence belongs to the SAM50/omp85 family. In terms of assembly, associates with the mitochondrial contact site and cristae organizing system (MICOS) complex (also known as MINOS or MitOS complex).

Its subcellular location is the mitochondrion outer membrane. Functionally, may play a role in the maintenance of the structure of mitochondrial cristae. This Drosophila melanogaster (Fruit fly) protein is SAM50-like protein CG7639.